The primary structure comprises 282 residues: Bifunctional protein FolD (282 aa).

Residues 165–167 (GRS), Ser-190, and Thr-231 each bind NADP(+).

The protein belongs to the tetrahydrofolate dehydrogenase/cyclohydrolase family. In terms of assembly, homodimer.

It catalyses the reaction (6R)-5,10-methylene-5,6,7,8-tetrahydrofolate + NADP(+) = (6R)-5,10-methenyltetrahydrofolate + NADPH. It carries out the reaction (6R)-5,10-methenyltetrahydrofolate + H2O = (6R)-10-formyltetrahydrofolate + H(+). The protein operates within one-carbon metabolism; tetrahydrofolate interconversion. Functionally, catalyzes the oxidation of 5,10-methylenetetrahydrofolate to 5,10-methenyltetrahydrofolate and then the hydrolysis of 5,10-methenyltetrahydrofolate to 10-formyltetrahydrofolate. The polypeptide is Bifunctional protein FolD (Clostridium botulinum (strain Alaska E43 / Type E3)).